We begin with the raw amino-acid sequence, 530 residues long: Chaperone Ric-8A (530 aa).

Phosphoserine is present on serine 435. 2 positions are modified to phosphothreonine: threonine 440 and threonine 442. Serine 501, serine 522, serine 523, and serine 527 each carry phosphoserine.

The protein belongs to the synembryn family. Interacts with GDP-bound G alpha proteins GNAI1, GNAO1 and GNAQ, and with GNA13 with lower affinity. Does not interact with G-alpha proteins when they are in complex with subunits beta and gamma. Interacts (via C-terminus) with RGS14; the interaction stimulates the dissociation of the complex between RGS14 and the active GTP-bound form of GNAI1. Interacts with NCS1; interaction is favored in the absence of Ca(2+) and myristoylation of NCS1 is not required. Phosphorylated at Ser-435 and Thr-440 by CK2, stabilizing its interface with G alpha proteins.

The protein resides in the cytoplasm. It localises to the cell cortex. In terms of biological role, chaperone that specifically binds and folds nascent G alpha proteins prior to G protein heterotrimer formation, promoting their stability and activity: folds GNAI1, GNAO1, GNA13 and GNAQ. Does not fold G(s) G-alpha proteins GNAS nor GNAL. Also acts as a guanine nucleotide exchange factor (GEF) for G alpha proteins by stimulating exchange of bound GDP for free GTP. Involved in regulation of microtubule pulling forces during mitotic movement of chromosomes by stimulating G(i)-alpha protein (GNAI1), possibly leading to release G(i)-alpha-GTP and NuMA proteins from the NuMA-GPSM2-G(i)-alpha-GDP complex. Also acts as an activator for G(q)-alpha (GNAQ) protein by enhancing the G(q)-coupled receptor-mediated ERK activation. The chain is Chaperone Ric-8A (RIC8A) from Pongo abelii (Sumatran orangutan).